The sequence spans 700 residues: MTAVSANGKTTEKHENGAHTNGTTNGTTNGSMNGNEISHVQKLQPVYYKPPQNLETFELSLRNHFEEKTNKKFADYREFHRFTCDNYGIFWEDLLKLSDVKLHQNYNQVIDHNLKINERPRWFNGATLNYTENVIERGTATDIAVLNASIEETVTEYTYDNLRKDVYRIATSLRNYGIGPGDTVCGFVPNTYDTLVAVFATAAVGAAWCSASVDFGPAGVLDRFRQVHPKVLFTVNHVTYKKKLIDQTDKINEIVKELPTLEKIVVSDTFTSVKFDATKYNQSDKFSSLEEFKTPIADVVLPFVYTPVPFSDPLFVMFSSGTTGIPKAMVHTVGGTLLKHIEEHLVQGDSKKHDRMFFYTTCGWMMYNWMISFLYSKGSVVLFDECPLAPDTHIIMKIAAKTQSTMIGMGAKLYDEYLRLQIPFNTLYDLSKIHTVYSTGSPLKKECFAYINTYIAPGALIASISGGTDIIGCFVGGIKSLSITPGECQCLFLGMDIKSFNYMDEEIINSDEQGELVCVTPFPSMPSHFLNDTDGKKYRDAYFARLEPFWAHGDFVRVNHSTGGVEMLGRSDATLNRGGVRIGTAEIYSVVEKIPHIADCIVAGRLVEEGMDEEVLLFVKMVPGQELTHSIQAAIVSKLRNDMSPRHVPNKIYAVDDIPYTSSGKKVEVAVKQIVSGKAVQKASSIRNPESLDHFVQYRL.

The tract at residues 1-35 (MTAVSANGKTTEKHENGAHTNGTTNGTTNGSMNGN) is disordered. Low complexity predominate over residues 18–35 (AHTNGTTNGTTNGSMNGN).

It belongs to the ATP-dependent AMP-binding enzyme family. Present in most cells of the organism.

The protein localises to the cytoplasm. It localises to the nucleus. The enzyme catalyses acetoacetate + ATP + CoA = acetoacetyl-CoA + AMP + diphosphate. Activates acetoacetate to acetoacetyl-CoA. Negatively regulates let-60 Ras activity during vulval induction. The protein is Acetoacetyl-CoA synthetase (sur-5) of Caenorhabditis elegans.